Here is a 93-residue protein sequence, read N- to C-terminus: Envelope small membrane protein (93 aa).

The Virion surface portion of the chain corresponds to 1–11 (MMNLLNKSLEE). Residues 12-32 (NGSVLTAFYIFVAFVALYLLG) form a helical membrane-spanning segment. At 33–93 (RALQAFVQAA…NEFPKNGWKQ (61 aa)) the chain is on the intravirion side.

Belongs to the gammacoronaviruses E protein family. Homooligomer. Interacts with the M membrane protein in the budding compartment of the host cell, which is located between endoplasmic reticulum and the Golgi complex. The cytoplasmic tails of both proteins are important for this function. Interacts with Nucleoprotein.

Its subcellular location is the host Golgi apparatus membrane. Plays a central role in virus morphogenesis and assembly. Acts as a viroporin and self-assembles in host membranes forming pentameric protein-lipid pores that allow ion transport. Also plays a role in the induction of apoptosis. This chain is Envelope small membrane protein, found in Avian infectious bronchitis virus (strain Portugal/322/82) (IBV).